A 113-amino-acid polypeptide reads, in one-letter code: MSDANVPLSFSDVAANKVKTLIAEEENPELKLRVYITGGGCSGFQYGFTFDEKVNDGDMTIENSGVTLVVDPMSLQYLVGGIVDYTEGLEGSRFFVNNPNATTTCGCGASFSV.

Iron-sulfur cluster-binding residues include Cys-41, Cys-105, and Cys-107.

It belongs to the HesB/IscA family. Homodimer. Requires iron-sulfur cluster as cofactor.

In terms of biological role, required for insertion of 4Fe-4S clusters for at least IspG. In Photobacterium profundum (strain SS9), this protein is Iron-sulfur cluster insertion protein ErpA.